The following is a 402-amino-acid chain: Deoxyguanosinetriphosphate triphosphohydrolase-like protein 2 (402 aa).

The region spanning 72–215 (RLTHSLEVAQ…MDLADEIAYA (144 aa)) is the HD domain.

The protein belongs to the dGTPase family. Type 2 subfamily.

This Vibrio cholerae serotype O1 (strain ATCC 39315 / El Tor Inaba N16961) protein is Deoxyguanosinetriphosphate triphosphohydrolase-like protein 2.